Reading from the N-terminus, the 1107-residue chain is Unconventional myosin-Ie (1107 aa).

A Myosin motor domain is found at 19–692 (SGVDDMVLLS…SLFLLEEMRE (674 aa)). Residue 112-119 (GESGAGKT) participates in ATP binding. Positions 581 to 591 (PHYIRCIKPNE) are actin-binding. Residues 695-724 (YDGYARVIQKTWRKFVARKKYVQMREDASD) form the IQ domain. In terms of domain architecture, TH1 spans 730 to 922 (KERRRNSINR…NKVLQVSIGP (193 aa)). The disordered stretch occupies residues 920 to 1052 (IGPGLPKNAR…KPQPKPKPQV (133 aa)). Polar residues-rich tracts occupy residues 933-949 (RNTV…NNNY), 977-989 (SGNQ…SLYT), and 998-1012 (RQQS…QTPE). At Ser1001 the chain carries Phosphoserine. The span at 1034–1051 (RPPPAGGRPKPQPKPKPQ) shows a compositional bias: pro residues. Residues 1050-1107 (PQVPQCKALYAYDAQDTDELSFNANDVIDIIKEDPSGWWTGRLRGKQGLFPNNYVTKI) form the SH3 domain.

It belongs to the TRAFAC class myosin-kinesin ATPase superfamily. Myosin family. As to quaternary structure, interacts with CALM and F-actin. Interacts (via SH3 domain) with SYNJ1, DNM1 and DNM2. Interacts with ARL14EP. Interacts with CARMIL1. As to expression, detected in brain stem, brain cortex, cerebellum, stomach, colon, heart, lung, liver, spleen and kidney. Detected in utricle, cochlea, outer hair cell bundle cuticular plate and vestibular epithelia (at protein level). Detected in cochlea and vestibular tissues. Detected in kidney, lung, spleen and intestine.

The protein localises to the cytoplasm. It localises to the cytoskeleton. The protein resides in the cytoplasmic vesicle. It is found in the clathrin-coated vesicle. Its subcellular location is the cell junction. Functionally, myosins are actin-based motor molecules with ATPase activity. Unconventional myosins serve in intracellular movements. Their highly divergent tails bind to membranous compartments, which are then moved relative to actin filaments. Binds to membranes containing anionic phospholipids via its tail domain. Involved in clathrin-mediated endocytosis and intracellular movement of clathrin-coated vesicles. Required for normal morphology of the glomerular basement membrane, normal development of foot processes by kidney podocytes and normal kidney function. In dendritic cells, may control the movement of class II-containing cytoplasmic vesicles along the actin cytoskeleton by connecting them with the actin network via ARL14EP and ARL14. The protein is Unconventional myosin-Ie (Myo1e) of Rattus norvegicus (Rat).